Consider the following 638-residue polypeptide: 1-deoxy-D-xylulose-5-phosphate synthase (638 aa).

Thiamine diphosphate-binding positions include H75 and 116-118; that span reads AHS. A Mg(2+)-binding site is contributed by D147. Thiamine diphosphate contacts are provided by residues 148–149, N177, Y288, and E370; that span reads GA. Residue N177 participates in Mg(2+) binding.

The protein belongs to the transketolase family. DXPS subfamily. In terms of assembly, homodimer. Requires Mg(2+) as cofactor. Thiamine diphosphate is required as a cofactor.

The enzyme catalyses D-glyceraldehyde 3-phosphate + pyruvate + H(+) = 1-deoxy-D-xylulose 5-phosphate + CO2. The protein operates within metabolic intermediate biosynthesis; 1-deoxy-D-xylulose 5-phosphate biosynthesis; 1-deoxy-D-xylulose 5-phosphate from D-glyceraldehyde 3-phosphate and pyruvate: step 1/1. Functionally, catalyzes the acyloin condensation reaction between C atoms 2 and 3 of pyruvate and glyceraldehyde 3-phosphate to yield 1-deoxy-D-xylulose-5-phosphate (DXP). This is 1-deoxy-D-xylulose-5-phosphate synthase from Cupriavidus taiwanensis (strain DSM 17343 / BCRC 17206 / CCUG 44338 / CIP 107171 / LMG 19424 / R1) (Ralstonia taiwanensis (strain LMG 19424)).